A 172-amino-acid polypeptide reads, in one-letter code: Putative phosphoesterase BcerKBAB4_1135 (172 aa).

His-34 serves as the catalytic Proton donor. Short sequence motifs (HXTX) lie at residues 34-37 and 115-118; these read HITL and HLTI. The active-site Proton acceptor is the His-115.

This sequence belongs to the 2H phosphoesterase superfamily. YjcG family.

This Bacillus mycoides (strain KBAB4) (Bacillus weihenstephanensis) protein is Putative phosphoesterase BcerKBAB4_1135.